We begin with the raw amino-acid sequence, 154 residues long: Large ribosomal subunit protein uL13 (154 aa).

It belongs to the universal ribosomal protein uL13 family. In terms of assembly, part of the 50S ribosomal subunit.

This protein is one of the early assembly proteins of the 50S ribosomal subunit, although it is not seen to bind rRNA by itself. It is important during the early stages of 50S assembly. The polypeptide is Large ribosomal subunit protein uL13 (Cereibacter sphaeroides (strain ATCC 17025 / ATH 2.4.3) (Rhodobacter sphaeroides)).